The chain runs to 1050 residues: Calmodulin-binding transcription activator 2 (1050 aa).

Positions 15 to 141 (IKQLLSEAQH…YLEVKGNRMS (127 aa)) form a DNA-binding region, CG-1. Polar residues-rich tracts occupy residues 141-171 (STSG…SSIL) and 183-196 (SRQA…NPEP). Disordered stretches follow at residues 141 to 196 (STSG…NPEP) and 223 to 246 (NRDG…SGDV). ANK repeat units follow at residues 661 to 690 (DGQG…SINF) and 694 to 723 (NGWS…DAGA). 2 consecutive IQ domains span residues 870–899 (VHAA…RIVK) and 893–922 (IRQR…SVGL). Positions 918–940 (WSVGLLEKIILRWRRKGSGLRGF) are calmodulin-binding. Positions 957-985 (QEDDYDFLKEGRKQTEERLQKALTRVKSM) form a coiled coil. Ser-984 is subject to Phosphoserine.

The protein belongs to the CAMTA family. As to expression, expressed in roots, stems, old leaves, petals, sepals, top of carpels, stigmas, stamen filaments, anthers and siliques, but not in pollen.

Its subcellular location is the nucleus. Functionally, transcription activator that binds to the DNA consensus sequence 5'-[ACG]CGCG[GTC]-3'. Regulates transcriptional activity in response to calcium signals. Binds calmodulin in a calcium-dependent manner. Involved in freezing tolerance in association with CAMTA1 and CAMTA3. Contributes together with CAMTA1 and CAMTA3 to the positive regulation of the cold-induced expression of DREB1A/CBF3, DREB1B/CBF1 and DREB1C/CBF2. Involved together with CAMTA3 and CAMTA4 in the positive regulation of a general stress response. Involved in tolerance to aluminum. Binds to the promoter of ALMT1 transporter and contributes to the positive regulation of aluminum-induced expression of ALMT1. The protein is Calmodulin-binding transcription activator 2 of Arabidopsis thaliana (Mouse-ear cress).